A 224-amino-acid chain; its full sequence is Small ribosomal subunit protein uS3 (224 aa).

The KH type-2 domain maps to 38 to 106 (LREYVKEKLG…EVYLNVVEVR (69 aa)).

The protein belongs to the universal ribosomal protein uS3 family. As to quaternary structure, part of the 30S ribosomal subunit. Forms a tight complex with proteins S10 and S14.

Binds the lower part of the 30S subunit head. Binds mRNA in the 70S ribosome, positioning it for translation. In Anaeromyxobacter sp. (strain Fw109-5), this protein is Small ribosomal subunit protein uS3.